Here is a 159-residue protein sequence, read N- to C-terminus: Lipoprotein signal peptidase (159 aa).

The next 3 helical transmembrane spans lie at Pro-4–Thr-24, Met-64–Lys-84, and Gly-88–Ile-108. Residues Asp-118 and Asp-136 contribute to the active site. A helical transmembrane segment spans residues Ile-131–Leu-151.

This sequence belongs to the peptidase A8 family.

It is found in the cell membrane. It carries out the reaction Release of signal peptides from bacterial membrane prolipoproteins. Hydrolyzes -Xaa-Yaa-Zaa-|-(S,diacylglyceryl)Cys-, in which Xaa is hydrophobic (preferably Leu), and Yaa (Ala or Ser) and Zaa (Gly or Ala) have small, neutral side chains.. The protein operates within protein modification; lipoprotein biosynthesis (signal peptide cleavage). This protein specifically catalyzes the removal of signal peptides from prolipoproteins. This chain is Lipoprotein signal peptidase, found in Staphylococcus carnosus (strain TM300).